Consider the following 473-residue polypeptide: Pentatricopeptide repeat-containing protein At3g60050 (473 aa).

PPR repeat units lie at residues 148–182 (TVNS…GFPT), 183–217 (TART…NYRP), 218–252 (FKHS…GFSP), 253–287 (DVLT…GFSP), 288–322 (DSYT…GIDP), 323–357 (SVLH…GCRP), 358–392 (DVVC…GQLP), 393–427 (NVFT…GCNP), and 428–462 (NFVV…GHYV).

It belongs to the PPR family. P subfamily.

This Arabidopsis thaliana (Mouse-ear cress) protein is Pentatricopeptide repeat-containing protein At3g60050.